The following is a 238-amino-acid chain: Ribonuclease PH (238 aa).

Phosphate is bound by residues R86 and 124-126; that span reads GTR.

Belongs to the RNase PH family. Homohexameric ring arranged as a trimer of dimers.

The enzyme catalyses tRNA(n+1) + phosphate = tRNA(n) + a ribonucleoside 5'-diphosphate. Functionally, phosphorolytic 3'-5' exoribonuclease that plays an important role in tRNA 3'-end maturation. Removes nucleotide residues following the 3'-CCA terminus of tRNAs; can also add nucleotides to the ends of RNA molecules by using nucleoside diphosphates as substrates, but this may not be physiologically important. Probably plays a role in initiation of 16S rRNA degradation (leading to ribosome degradation) during starvation. The sequence is that of Ribonuclease PH from Agrobacterium fabrum (strain C58 / ATCC 33970) (Agrobacterium tumefaciens (strain C58)).